The sequence spans 261 residues: Thiazole synthase (261 aa).

Lys-98 functions as the Schiff-base intermediate with DXP in the catalytic mechanism. 1-deoxy-D-xylulose 5-phosphate contacts are provided by residues Gly-159, 185–186 (AG), and 207–208 (AS).

It belongs to the ThiG family. Homotetramer. Forms heterodimers with either ThiH or ThiS.

The protein localises to the cytoplasm. It carries out the reaction [ThiS sulfur-carrier protein]-C-terminal-Gly-aminoethanethioate + 2-iminoacetate + 1-deoxy-D-xylulose 5-phosphate = [ThiS sulfur-carrier protein]-C-terminal Gly-Gly + 2-[(2R,5Z)-2-carboxy-4-methylthiazol-5(2H)-ylidene]ethyl phosphate + 2 H2O + H(+). It participates in cofactor biosynthesis; thiamine diphosphate biosynthesis. Its function is as follows. Catalyzes the rearrangement of 1-deoxy-D-xylulose 5-phosphate (DXP) to produce the thiazole phosphate moiety of thiamine. Sulfur is provided by the thiocarboxylate moiety of the carrier protein ThiS. In vitro, sulfur can be provided by H(2)S. The polypeptide is Thiazole synthase (Mycobacterium leprae (strain Br4923)).